Consider the following 440-residue polypeptide: Glycerophosphocholine cholinephosphodiesterase ENPP6 (440 aa).

Positions 1-22 are cleaved as a signal peptide; sequence MAGKLWTFLLLFGFSWVWPASA. Positions 32, 71, and 92 each coordinate substrate. Residues D32 and S71 each contribute to the Zn(2+) site. The Nucleophile role is filled by S71. S71 carries the post-translational modification Phosphoserine. 2 N-linked (GlcNAc...) asparagine glycosylation sites follow: N100 and N118. C142 and C154 form a disulfide bridge. Substrate is bound at residue D193. Zn(2+)-binding residues include D193, H197, D240, and H241. H241 contacts substrate. Residue N341 is glycosylated (N-linked (GlcNAc...) asparagine). A substrate-binding site is contributed by H354. Residue H354 coordinates Zn(2+). N-linked (GlcNAc...) asparagine glycosylation occurs at N404. The GPI-anchor amidated serine moiety is linked to residue S419. Positions 420–440 are cleaved as a propeptide — removed in mature form; the sequence is SSPSIPPNSCALVLILLLYFV.

It belongs to the nucleotide pyrophosphatase/phosphodiesterase family. As to quaternary structure, homodimer; disulfide-linked. Homotetramer. It depends on Zn(2+) as a cofactor.

The protein localises to the cell membrane. The enzyme catalyses sn-glycerol 3-phosphocholine + H2O = phosphocholine + glycerol + H(+). It carries out the reaction a 1-acyl-sn-glycero-3-phosphocholine + H2O = a 1-acyl-sn-glycerol + phosphocholine + H(+). The catalysed reaction is a 1-O-alkyl-sn-glycero-3-phosphocholine + H2O = a 1-O-alkyl-sn-glycerol + phosphocholine + H(+). It catalyses the reaction 1-dodecanoyl-sn-glycero-3-phosphocholine + H2O = 1-dodecanoyl-sn-glycerol + phosphocholine + H(+). The enzyme catalyses 1-hexadecanoyl-sn-glycero-3-phosphocholine + H2O = 1-hexadecanoyl-sn-glycerol + phosphocholine + H(+). It carries out the reaction 1-(5Z,8Z,11Z,14Z-eicosatetraenoyl)-sn-glycero-3-phosphocholine + H2O = 1-(5Z,8Z,11Z,14Z-eicosatetraenoyl)-sn-glycerol + phosphocholine + H(+). The catalysed reaction is 1-tetradecanoyl-sn-glycero-3-phosphocholine + H2O = 1-tetradecanoyl-sn-glycerol + phosphocholine + H(+). It catalyses the reaction sphing-4-enine-phosphocholine + H2O = sphing-4-enine + phosphocholine + H(+). The enzyme catalyses 1-(9Z-octadecenoyl)-sn-glycero-3-phosphocholine + H2O = 1-(9Z-octadecenoyl)-sn-glycerol + phosphocholine + H(+). It carries out the reaction 1-(9Z,12Z)-octadecadienoyl-sn-glycero-3-phosphocholine + H2O = 1-(9Z,12Z-octadecadienoyl)-sn-glycerol + phosphocholine + H(+). The catalysed reaction is glycero-2-phosphocholine + H2O = phosphocholine + glycerol + H(+). With respect to regulation, inhibited by EDTA and EGTA in vitro. Functionally, choline-specific glycerophosphodiesterase that hydrolyzes glycerophosphocholine (GPC) and lysophosphatidylcholine (LPC) and contributes to supplying choline to the cells. Has a preference for LPC with short (12:0 and 14:0) or polyunsaturated (18:2 and 20:4) fatty acids. In vitro, hydrolyzes only choline-containing lysophospholipids, such as sphingosylphosphorylcholine (SPC), platelet-activating factor (PAF) and lysoPAF, but not other lysophospholipids. This chain is Glycerophosphocholine cholinephosphodiesterase ENPP6, found in Rattus norvegicus (Rat).